Reading from the N-terminus, the 688-residue chain is DNA-directed RNA polymerase subunit beta' (688 aa).

Zn(2+) contacts are provided by Cys-69, Cys-71, Cys-87, and Cys-90. Residues Asp-489, Asp-491, and Asp-493 each coordinate Mg(2+).

Belongs to the RNA polymerase beta' chain family. RpoC1 subfamily. In terms of assembly, in plastids the minimal PEP RNA polymerase catalytic core is composed of four subunits: alpha, beta, beta', and beta''. When a (nuclear-encoded) sigma factor is associated with the core the holoenzyme is formed, which can initiate transcription. It depends on Mg(2+) as a cofactor. Requires Zn(2+) as cofactor.

It is found in the plastid. Its subcellular location is the chloroplast. It carries out the reaction RNA(n) + a ribonucleoside 5'-triphosphate = RNA(n+1) + diphosphate. In terms of biological role, DNA-dependent RNA polymerase catalyzes the transcription of DNA into RNA using the four ribonucleoside triphosphates as substrates. The sequence is that of DNA-directed RNA polymerase subunit beta' from Piper cenocladum (Ant piper).